Consider the following 208-residue polypeptide: ATP phosphoribosyltransferase (208 aa).

It belongs to the ATP phosphoribosyltransferase family. Short subfamily. In terms of assembly, heteromultimer composed of HisG and HisZ subunits.

Its subcellular location is the cytoplasm. The catalysed reaction is 1-(5-phospho-beta-D-ribosyl)-ATP + diphosphate = 5-phospho-alpha-D-ribose 1-diphosphate + ATP. The protein operates within amino-acid biosynthesis; L-histidine biosynthesis; L-histidine from 5-phospho-alpha-D-ribose 1-diphosphate: step 1/9. Functionally, catalyzes the condensation of ATP and 5-phosphoribose 1-diphosphate to form N'-(5'-phosphoribosyl)-ATP (PR-ATP). Has a crucial role in the pathway because the rate of histidine biosynthesis seems to be controlled primarily by regulation of HisG enzymatic activity. This chain is ATP phosphoribosyltransferase, found in Thermotoga neapolitana (strain ATCC 49049 / DSM 4359 / NBRC 107923 / NS-E).